Here is a 402-residue protein sequence, read N- to C-terminus: Aminotransferase-like protein FGM3 (402 aa).

Residues 137 to 138 (TI), D218, and 282 to 283 (FG) each bind pyridoxal 5'-phosphate.

Belongs to the class-V pyridoxal-phosphate-dependent aminotransferase family. Csd subfamily.

In terms of biological role, aminotransferase-like protein; part of the Fg3_54/C64 gene cluster that mediates the biosynthesis of the octapeptide fusaoctaxin A, a virulence factor that is required for cell-to-cell invasiveness of plant host. The 2 nonribosomal peptide synthetases NRPS9 and NRPS5 form an assembly line which likely utilizes GABA as a starter unit (loaded on the unique module M1 of NRPS9) and sequentially incorporates seven extender units composed of the residues L-Ala, L-allo-Ile, L-Ser, L-Val, L-Ser, L-Leu and L-Leu, respectively. During the process, each of the residues that are tethered on modules M3-M7 of NRPS5 containing an E domain can undergo an epimerization reaction to produce a D-configuration before the transpeptidation reaction occurs. The elongation of the peptidyl chain might be terminated by module M8-mediated L-Leu incorporation, followed by R domain-catalyzed 4 electron reduction to release the resulting octapeptide from the assembly line as an alcohol. Fusaoctaxin A is cleaved by the cluster specific ABC transporter FGM5 to the pentapeptide fusapentaxin A and the tripeptide fusatrixin A. The other enzymes from the cluster, FGM1, FGM2, FGM3 and FGM9 seem not to be involved in the biosynthesis of fusaoctaxin A and their functions have still to be determined. The sequence is that of Aminotransferase-like protein FGM3 from Gibberella zeae (strain ATCC MYA-4620 / CBS 123657 / FGSC 9075 / NRRL 31084 / PH-1) (Wheat head blight fungus).